The primary structure comprises 394 residues: Venom metalloproteinase antarease TserMP_A (394 aa).

The N-terminal stretch at 1–16 (MISYLASIFLLATVSA) is a signal peptide. A propeptide spanning residues 17–157 (VPSGRVEVVF…NAENVSRMAR (141 aa)) is cleaved from the precursor. A Peptidase M12B domain is found at 162-391 (IVVEYYIVTD…PTASCIFQQC (230 aa)). An intrachain disulfide couples C295 to C386. Residue H319 coordinates Zn(2+). Residue E320 is part of the active site. H323 and H329 together coordinate Zn(2+).

Zn(2+) serves as cofactor. Contains 4 disulfide bonds. Expressed by the venom gland.

The protein localises to the secreted. With respect to regulation, inhibited by EDTA. Acts as a metalloprotease. Penetrates intact tissue and specifically cleaves the vesicle-associated membrane protein 2 (VAMP2) (part of the SNARE complex) involved in pancreatic secretion, thus disrupting the normal vesicular traffic. The chain is Venom metalloproteinase antarease TserMP_A from Tityus serrulatus (Brazilian scorpion).